Reading from the N-terminus, the 158-residue chain is Ribonuclease HI (158 aa).

The 142-residue stretch at 3 to 144 (ELKLIHIFTD…CDQLARAAAE (142 aa)) folds into the RNase H type-1 domain. Residues Asp12, Glu50, Asp72, and Asp136 each contribute to the Mg(2+) site.

It belongs to the RNase H family. Monomer. Requires Mg(2+) as cofactor.

Its subcellular location is the cytoplasm. The catalysed reaction is Endonucleolytic cleavage to 5'-phosphomonoester.. Functionally, endonuclease that specifically degrades the RNA of RNA-DNA hybrids. The chain is Ribonuclease HI from Shewanella oneidensis (strain ATCC 700550 / JCM 31522 / CIP 106686 / LMG 19005 / NCIMB 14063 / MR-1).